A 1089-amino-acid chain; its full sequence is SUMO-specific isopeptidase USPL1 (1089 aa).

The disordered stretch occupies residues 90 to 128 (LISPDSEDCPTPSKPQKRKRLETNCRNSPLPVHSKKTRS). Positions 215–488 (VQWKNTQALC…ETHIVIWERK (274 aa)) constitute a USP domain. Residue cysteine 224 is the Nucleophile of the active site. The SUMO-binding stretch occupies residues 224–483 (CWLDCILSAL…EVPASETHIV (260 aa)). Histidine 444 functions as the Proton acceptor in the catalytic mechanism. 4 disordered regions span residues 687–739 (DSQT…KEDQ), 791–817 (ISRR…SPPL), 835–868 (LREQ…AAED), and 891–928 (LISS…CGSP). A compositionally biased stretch (polar residues) spans 719 to 733 (TASSKTVAARSAQNQ). Basic residues predominate over residues 791–803 (ISRRSKRMSRKAK). The residue at position 894 (serine 894) is a Phosphoserine. Basic and acidic residues predominate over residues 895–907 (PHREPSLSDHSEP).

The protein belongs to the peptidase C19 family. Interacts with ELL.

It localises to the nucleus. It is found in the cajal body. Functionally, SUMO-specific isopeptidase involved in protein desumoylation. Specifically binds SUMO proteins with a higher affinity for SUMO2 and SUMO3 which it cleaves more efficiently. Also able to process full-length SUMO proteins to their mature forms. Plays a key role in RNA polymerase-II-mediated snRNA transcription in the Cajal bodies. Is a component of complexes that can bind to U snRNA genes. The protein is SUMO-specific isopeptidase USPL1 (Uspl1) of Mus musculus (Mouse).